The following is a 160-amino-acid chain: Peripheral myelin protein 22 (160 aa).

Position 1 (Met1) is a topological domain, cytoplasmic. The chain crosses the membrane as a helical span at residues 2–31 (LLLLLGILFLHIAVLVLLFVSTIVSQWLVG). The Extracellular segment spans residues 32 to 64 (NGHRTDLWQNCTTSALGAVQHCYSSSVSEWLQS). The N-linked (GlcNAc...) asparagine glycan is linked to Asn41. Residues 65–91 (VQATMILSVIFSVLSLFLFFCQLFTLT) form a helical membrane-spanning segment. Residues 92 to 95 (KGGR) are Cytoplasmic-facing. The helical transmembrane segment at 96–119 (FYITGVFQILAGLCVMSAAAIYTV) threads the bilayer. Over 120–133 (RHSEWHVNNDYSYG) the chain is Extracellular. Residues 134–156 (FAYILAWVAFPLALLSGIIYVIL) traverse the membrane as a helical segment. Residues 157-160 (RKRE) lie on the Cytoplasmic side of the membrane.

This sequence belongs to the PMP-22/EMP/MP20 family. In terms of processing, ubiquitinated by the DCX(DCAF13) E3 ubiquitin ligase complex, leading to its degradation. Found exclusively in the peripheral nervous system. Present in both myelinating and nonmyelinating Schwann cells. Found in the tumors of Schwann cell lineage where axons are present (neurofibromas) but not where axons are absent (schwannomas).

It is found in the cell membrane. In terms of biological role, might be involved in growth regulation, and in myelinization in the peripheral nervous system. The sequence is that of Peripheral myelin protein 22 (Pmp22) from Rattus norvegicus (Rat).